Reading from the N-terminus, the 440-residue chain is Glutamyl-tRNA reductase (440 aa).

Substrate is bound by residues 50 to 53 (TCNR), Ser-109, 114 to 116 (EPQ), and Gln-120. The active-site Nucleophile is the Cys-51. An NADP(+)-binding site is contributed by 189–194 (GAGEMA).

The protein belongs to the glutamyl-tRNA reductase family. As to quaternary structure, homodimer.

The catalysed reaction is (S)-4-amino-5-oxopentanoate + tRNA(Glu) + NADP(+) = L-glutamyl-tRNA(Glu) + NADPH + H(+). It participates in porphyrin-containing compound metabolism; protoporphyrin-IX biosynthesis; 5-aminolevulinate from L-glutamyl-tRNA(Glu): step 1/2. Functionally, catalyzes the NADPH-dependent reduction of glutamyl-tRNA(Glu) to glutamate 1-semialdehyde (GSA). This Nitratidesulfovibrio vulgaris (strain ATCC 29579 / DSM 644 / CCUG 34227 / NCIMB 8303 / VKM B-1760 / Hildenborough) (Desulfovibrio vulgaris) protein is Glutamyl-tRNA reductase.